The chain runs to 559 residues: 2-isopropylmalate synthase (559 aa).

The Pyruvate carboxyltransferase domain occupies 33-307 (PIWCSSDLRD…DPQLDFSDID (275 aa)). Positions 42, 246, 248, and 282 each coordinate Mg(2+). The interval 439 to 559 (ANTPYALVSH…SLSQQEAKAA (121 aa)) is regulatory domain.

Belongs to the alpha-IPM synthase/homocitrate synthase family. LeuA type 2 subfamily. Homodimer. Requires Mg(2+) as cofactor.

Its subcellular location is the cytoplasm. It catalyses the reaction 3-methyl-2-oxobutanoate + acetyl-CoA + H2O = (2S)-2-isopropylmalate + CoA + H(+). The protein operates within amino-acid biosynthesis; L-leucine biosynthesis; L-leucine from 3-methyl-2-oxobutanoate: step 1/4. Its function is as follows. Catalyzes the condensation of the acetyl group of acetyl-CoA with 3-methyl-2-oxobutanoate (2-ketoisovalerate) to form 3-carboxy-3-hydroxy-4-methylpentanoate (2-isopropylmalate). The chain is 2-isopropylmalate synthase from Pseudomonas fluorescens (strain SBW25).